Here is a 262-residue protein sequence, read N- to C-terminus: Large ribosomal subunit protein uL10m (262 aa).

The transit peptide at 1-28 (MAAAVAGILRGGLPPRAAWLPTLQTVRH) directs the protein to the mitochondrion. A disordered region spans residues 243–262 (GDCATSANEKLHPPDPAPDA).

It belongs to the universal ribosomal protein uL10 family. As to quaternary structure, component of the mitochondrial ribosome large subunit (39S) which comprises a 16S rRNA and about 50 distinct proteins.

The protein localises to the mitochondrion. The polypeptide is Large ribosomal subunit protein uL10m (Mrpl10) (Mus musculus (Mouse)).